We begin with the raw amino-acid sequence, 451 residues long: UDP-N-acetylmuramoylalanine--D-glutamate ligase (451 aa).

ATP is bound at residue Gly-119–Thr-125.

This sequence belongs to the MurCDEF family.

It is found in the cytoplasm. The catalysed reaction is UDP-N-acetyl-alpha-D-muramoyl-L-alanine + D-glutamate + ATP = UDP-N-acetyl-alpha-D-muramoyl-L-alanyl-D-glutamate + ADP + phosphate + H(+). It functions in the pathway cell wall biogenesis; peptidoglycan biosynthesis. In terms of biological role, cell wall formation. Catalyzes the addition of glutamate to the nucleotide precursor UDP-N-acetylmuramoyl-L-alanine (UMA). In Streptococcus agalactiae serotype Ia (strain ATCC 27591 / A909 / CDC SS700), this protein is UDP-N-acetylmuramoylalanine--D-glutamate ligase.